A 199-amino-acid polypeptide reads, in one-letter code: Large ribosomal subunit protein bL25 (199 aa).

It belongs to the bacterial ribosomal protein bL25 family. CTC subfamily. As to quaternary structure, part of the 50S ribosomal subunit; part of the 5S rRNA/L5/L18/L25 subcomplex. Contacts the 5S rRNA. Binds to the 5S rRNA independently of L5 and L18.

Functionally, this is one of the proteins that binds to the 5S RNA in the ribosome where it forms part of the central protuberance. This chain is Large ribosomal subunit protein bL25, found in Herpetosiphon aurantiacus (strain ATCC 23779 / DSM 785 / 114-95).